Reading from the N-terminus, the 761-residue chain is T-box protein 1 (761 aa).

Disordered stretches follow at residues M1–T85 and Q167–P210. Polar residues-rich tracts occupy residues D37–G61 and Q167–A179. Composition is skewed to low complexity over residues S180–S191 and S198–P210. A DNA-binding region (T-box) is located at residues L287 to D456. Polar residues predominate over residues T496–N510. Disordered stretches follow at residues T496–G515, S545–H612, and V637–T687. A compositionally biased stretch (basic and acidic residues) spans G600–H612. A compositionally biased stretch (polar residues) spans V637–D646. Low complexity predominate over residues S656–T687.

The protein resides in the nucleus. In terms of biological role, probable transcriptional regulator involved in developmental processes. This Patiria pectinifera (Starfish) protein is T-box protein 1 (tbr1).